A 311-amino-acid chain; its full sequence is Non-homologous end joining protein Ku (311 aa).

The 185-residue stretch at 26 to 210 (ISFGLVNIPI…NVNDKELQTA (185 aa)) folds into the Ku domain. The disordered stretch occupies residues 269–311 (ASIDRTRRPNRETPAAAPAQAAEPKGAGDKKQKTTRKKASGTS). Positions 282 to 293 (PAAAPAQAAEPK) are enriched in low complexity. The segment covering 301-311 (KTTRKKASGTS) has biased composition (basic residues).

It belongs to the prokaryotic Ku family. In terms of assembly, homodimer. Interacts with LigD.

It is found in the spore core. Its function is as follows. With LigD forms a non-homologous end joining (NHEJ) DNA repair enzyme, which repairs dsDNA breaks with reduced fidelity. Binds linear dsDNA with 5'- and 3'- overhangs but not closed circular dsDNA nor ssDNA. Recruits and stimulates the ligase activity of LigD. Probably involved in DNA repair during spore germination. This Bacillus subtilis (strain 168) protein is Non-homologous end joining protein Ku.